The sequence spans 285 residues: Probable endonuclease 4 (285 aa).

Residues H68, H108, E145, D179, H182, H216, D229, H231, and E261 each contribute to the Zn(2+) site.

The protein belongs to the AP endonuclease 2 family. Zn(2+) serves as cofactor.

It carries out the reaction Endonucleolytic cleavage to 5'-phosphooligonucleotide end-products.. Endonuclease IV plays a role in DNA repair. It cleaves phosphodiester bonds at apurinic or apyrimidinic (AP) sites, generating a 3'-hydroxyl group and a 5'-terminal sugar phosphate. The polypeptide is Probable endonuclease 4 (Geotalea daltonii (strain DSM 22248 / JCM 15807 / FRC-32) (Geobacter daltonii)).